Consider the following 79-residue polypeptide: Small ribosomal subunit protein bS18 (79 aa).

This sequence belongs to the bacterial ribosomal protein bS18 family. In terms of assembly, part of the 30S ribosomal subunit. Forms a tight heterodimer with protein bS6.

Functionally, binds as a heterodimer with protein bS6 to the central domain of the 16S rRNA, where it helps stabilize the platform of the 30S subunit. In Rhodopseudomonas palustris (strain BisB5), this protein is Small ribosomal subunit protein bS18.